The chain runs to 386 residues: MKINCLFCCMSHRRFNRRSSSRQSIKDCIDAKNNITTFDNISFKTDSSRRRYISEEIAKLGKGNISAHIFTFRELCVATKNFNPDNQLGEGGFGRVYKGQIETPEQVVAVKQLDRNGYQGNREFLVEVMMLSLLHHQNLVNLVGYCADGDQRILVYEYMQNGSLEDHLLELARNKKKPLDWDTRMKVAAGAARGLEYLHETADPPVIYRDFKASNILLDEEFNPKLSDFGLAKVGPTGGETHVSTRVMGTYGYCAPEYALTGQLTVKSDVYSFGVVFLEMITGRRVIDTTKPTEEQNLVTWASPLFKDRRKFTLMADPLLEGKYPIKGLYQALAVAAMCLQEEAATRPMMSDVVTALEYLAVTKTEEDGQTVEGEEEEEEDERSKL.

The S-palmitoyl cysteine moiety is linked to residue C5. The region spanning 82 to 360 (FNPDNQLGEG…SDVVTALEYL (279 aa)) is the Protein kinase domain. ATP is bound by residues 88–96 (LGEGGFGRV) and K111. The active-site Proton acceptor is the D210. Positions 365–386 (TEEDGQTVEGEEEEEEDERSKL) are disordered. Positions 368-386 (DGQTVEGEEEEEEDERSKL) are enriched in acidic residues.

It belongs to the protein kinase superfamily. Ser/Thr protein kinase family.

It localises to the cell membrane. It catalyses the reaction L-seryl-[protein] + ATP = O-phospho-L-seryl-[protein] + ADP + H(+). The enzyme catalyses L-threonyl-[protein] + ATP = O-phospho-L-threonyl-[protein] + ADP + H(+). Its function is as follows. May be involved in plant defense signaling. The polypeptide is Probable serine/threonine-protein kinase PBL23 (Arabidopsis thaliana (Mouse-ear cress)).